A 1158-amino-acid polypeptide reads, in one-letter code: ATP-dependent helicase/deoxyribonuclease subunit B (1158 aa).

In terms of domain architecture, UvrD-like helicase ATP-binding spans 1–275; sequence MTLHAYLGRA…QYFNQLYRFN (275 aa). Residue 8 to 15 coordinates ATP; sequence GRAGTGKS. The UvrD-like helicase C-terminal domain occupies 269–583; it reads NQLYRFNNQD…SIGTMDLAKV (315 aa). [4Fe-4S] cluster is bound by residues cysteine 784, cysteine 1112, cysteine 1115, and cysteine 1121.

The protein belongs to the helicase family. AddB/RexB type 1 subfamily. In terms of assembly, heterodimer of AddA and AddB. The cofactor is Mg(2+). It depends on [4Fe-4S] cluster as a cofactor.

Functionally, the heterodimer acts as both an ATP-dependent DNA helicase and an ATP-dependent, dual-direction single-stranded exonuclease. Recognizes the chi site generating a DNA molecule suitable for the initiation of homologous recombination. The AddB subunit has 5' -&gt; 3' nuclease activity but not helicase activity. This Staphylococcus aureus (strain MSSA476) protein is ATP-dependent helicase/deoxyribonuclease subunit B.